The sequence spans 312 residues: Olfactory receptor 2C1 (312 aa).

Topologically, residues Met1–Glu24 are extracellular. N-linked (GlcNAc...) asparagine glycosylation occurs at Asn6. A helical transmembrane segment spans residues Ile25–Leu48. Residues Ser49–Thr57 lie on the Cytoplasmic side of the membrane. A helical transmembrane segment spans residues Pro58 to Pro79. Over Gln80–Gln100 the chain is Extracellular. Cys97 and Cys189 are disulfide-bonded. Residues Leu101 to Phe120 traverse the membrane as a helical segment. The Cytoplasmic segment spans residues Asp121 to Arg139. Residues Leu140–Ser160 form a helical membrane-spanning segment. Residues Thr161–Asn200 lie on the Extracellular side of the membrane. Residues Gly201–Ala222 traverse the membrane as a helical segment. The Cytoplasmic segment spans residues Gln223–Lys236. The helical transmembrane segment at Ala237 to Leu261 threads the bilayer. Over Pro262 to Lys272 the chain is Extracellular. The helical transmembrane segment at Phe273–Leu292 threads the bilayer. The Cytoplasmic portion of the chain corresponds to Arg293–Ser312.

It belongs to the G-protein coupled receptor 1 family. In terms of tissue distribution, olfactory epithelium. Present in various subcellular compartments of the olfactory sensory neurons, particularly in the axonal processes and neve terminals.

Its subcellular location is the cell membrane. In terms of biological role, olfactory receptor that is activated by the binding of organosulfur odorants with thioether groups such as (methylthio)methanetiol (MTMT). Also binds odorants acetophenone and benzaldehyde. The activity of this receptor is mediated by G proteins which activate adenylyl cyclase. May be involved in the molecular processes underlying fasciculation and targeting of olfactory axons. The protein is Olfactory receptor 2C1 of Mus musculus (Mouse).